The sequence spans 342 residues: L-threonine 3-dehydrogenase (342 aa).

Cysteine 38 contributes to the Zn(2+) binding site. Catalysis depends on charge relay system residues threonine 40 and histidine 43. Histidine 63 and glutamate 64 together coordinate Zn(2+). NAD(+)-binding positions include isoleucine 175, aspartate 195, arginine 200, 263–265 (LGI), and 287–288 (VY).

This sequence belongs to the zinc-containing alcohol dehydrogenase family. In terms of assembly, homotetramer. Requires Zn(2+) as cofactor.

The protein localises to the cytoplasm. It carries out the reaction L-threonine + NAD(+) = (2S)-2-amino-3-oxobutanoate + NADH + H(+). The protein operates within amino-acid degradation; L-threonine degradation via oxydo-reductase pathway; glycine from L-threonine: step 1/2. In terms of biological role, catalyzes the NAD(+)-dependent oxidation of L-threonine to 2-amino-3-ketobutyrate. This is L-threonine 3-dehydrogenase from Ruegeria pomeroyi (strain ATCC 700808 / DSM 15171 / DSS-3) (Silicibacter pomeroyi).